Reading from the N-terminus, the 70-residue chain is Ranatuerin-2SN1 (70 aa).

An N-terminal signal peptide occupies residues 1–22 (MFTLKKSLLLIFFLGTISLSLC). A propeptide spans 23-40 (EKERDADDDEVEVIKQEE) (removed in mature form). Cys65 and Cys70 are joined by a disulfide.

The protein belongs to the frog skin active peptide (FSAP) family. Ranatuerin subfamily. In terms of tissue distribution, expressed by the skin glands.

Its subcellular location is the secreted. Functionally, antimicrobial peptide. Weakly active against P.faecalis X29. Not active against fungi. Shows very weak hemolytic activity against human erythrocytes. This chain is Ranatuerin-2SN1, found in Sylvirana spinulosa (Fine-spined frog).